The chain runs to 183 residues: Peptidoglycan recognition protein 1 (183 aa).

An N-terminal signal peptide occupies residues 1-17 (MLFAWAPFPALLGLADS). 3 cysteine pairs are disulfide-bonded: C18-C142, C34-C79, and C55-C61. Residues 40–168 (KPVRYVVISH…RDVQSTLSPG (129 aa)) form the N-acetylmuramoyl-L-alanine amidase domain.

It belongs to the N-acetylmuramoyl-L-alanine amidase 2 family. Expressed in all regions of the brain.

The protein resides in the secreted. It localises to the cytoplasmic granule. Innate immunity protein that plays several important functions in antimicrobial and antitumor defense systems. Acts as a pattern receptor that binds to murein peptidoglycans (PGN) of Gram-positive bacteria and thus provides bactericidal activity. Forms an equimolar complex with heat shock protein HSPA1A and induces programmed cell death through apoptosis and necroptosis in tumor cell lines by activating the TNFR1 receptor on the target cell membrane. In addition, acts in complex with the Ca(2+)-binding protein S100A4 as a chemoattractant able to induce lymphocyte movement. Mechanistically, this complex acts as a ligand of the chemotactic receptors CCR5 and CXCR3 which are present on the cells of the immune system. Promotes also the activation of lymphocytes that become able to kill virus-infected cells as well as tumor cells by modulating the spectrum of their target-cell specificity. Induction of cytotoxicity on monocyte surface requires interaction with TREM1 receptor. The sequence is that of Peptidoglycan recognition protein 1 (Pglyrp1) from Rattus norvegicus (Rat).